A 102-amino-acid polypeptide reads, in one-letter code: PE family immunomodulator PE15 (102 aa).

The PE domain maps to leucine 3–alanine 91.

The protein belongs to the mycobacterial PE family.

It localises to the secreted. The protein resides in the cell envelope. Its subcellular location is the cell surface. In terms of biological role, may play a pivotal role in the evasion of host immune response by M.tuberculosis. Mediates production of IL-10 via activation of the p38 and ERK1/2 mitogen-activated protein kinase (MAPK) signaling pathways. The sequence is that of PE family immunomodulator PE15 (PE15) from Mycobacterium tuberculosis (strain CDC 1551 / Oshkosh).